The sequence spans 197 residues: Phospholipid hydroperoxide glutathione peroxidase (197 aa).

Phosphoserine is present on Ser-40. Sec-73 is an active-site residue. Residue Sec-73 is a non-standard amino acid, selenocysteine.

The protein belongs to the glutathione peroxidase family. In terms of assembly, monomer. Has a tendency to form higher mass oligomers. Interacts with FUNDC1; this interaction promotes GPX4 recruitment into mitochondria through TOM/TIM complex where it is degraded by mitophagy.

The protein resides in the mitochondrion. The protein localises to the cytoplasm. The enzyme catalyses a hydroperoxy polyunsaturated fatty acid + 2 glutathione = a hydroxy polyunsaturated fatty acid + glutathione disulfide + H2O. It catalyses the reaction (12S)-hydroperoxy-(5Z,8Z,10E,14Z)-eicosatetraenoate + 2 glutathione = (12S)-hydroxy-(5Z,8Z,10E,14Z)-eicosatetraenoate + glutathione disulfide + H2O. The catalysed reaction is (13S)-hydroperoxy-(9Z,11E)-octadecadienoate + 2 glutathione = (13S)-hydroxy-(9Z,11E)-octadecadienoate + glutathione disulfide + H2O. Essential antioxidant peroxidase that directly reduces phospholipid hydroperoxide even if they are incorporated in membranes and lipoproteins. Can also reduce fatty acid hydroperoxide, cholesterol hydroperoxide and thymine hydroperoxide. Plays a key role in protecting cells from oxidative damage by preventing membrane lipid peroxidation. Required to prevent cells from ferroptosis, a non-apoptotic cell death resulting from an iron-dependent accumulation of lipid reactive oxygen species. The presence of selenocysteine (Sec) versus Cys at the active site is essential for life: it provides resistance to overoxidation and prevents cells against ferroptosis. The presence of Sec at the active site is also essential for the survival of a specific type of parvalbumin-positive interneurons, thereby preventing against fatal epileptic seizures. May be required to protect cells from the toxicity of ingested lipid hydroperoxides. Required for normal sperm development and male fertility. Essential for maturation and survival of photoreceptor cells. Plays a role in a primary T-cell response to viral and parasitic infection by protecting T-cells from ferroptosis and by supporting T-cell expansion. Plays a role of glutathione peroxidase in platelets in the arachidonic acid metabolism. Reduces hydroperoxy ester lipids formed by a 15-lipoxygenase that may play a role as down-regulator of the cellular 15-lipoxygenase pathway. This is Phospholipid hydroperoxide glutathione peroxidase from Sapajus apella (Brown-capped capuchin).